Consider the following 125-residue polypeptide: Large ribosomal subunit protein uL22 (125 aa).

This sequence belongs to the universal ribosomal protein uL22 family. In terms of assembly, part of the 50S ribosomal subunit.

In terms of biological role, this protein binds specifically to 23S rRNA; its binding is stimulated by other ribosomal proteins, e.g. L4, L17, and L20. It is important during the early stages of 50S assembly. It makes multiple contacts with different domains of the 23S rRNA in the assembled 50S subunit and ribosome. Functionally, the globular domain of the protein is located near the polypeptide exit tunnel on the outside of the subunit, while an extended beta-hairpin is found that lines the wall of the exit tunnel in the center of the 70S ribosome. The polypeptide is Large ribosomal subunit protein uL22 (Thermobifida fusca (strain YX)).